The sequence spans 1280 residues: E3 ubiquitin-protein ligase RKP (1280 aa).

The B30.2/SPRY domain maps to 82-269 (KLHGDLDVSV…CELNFGAYPF (188 aa)). The chain crosses the membrane as a helical span at residues 551 to 571 (SVLVSLFSVILHFLSEGFAML). Residues 669-719 (DRGKNTAQSSRGRCSSIPERSSHVAAECSAGSFSEEIDDKPSTSNQSDPDF) are disordered. The chain crosses the membrane as a helical span at residues 834–854 (ALCMWVVQLLLVLSKMDSVFV). An RING-type zinc finger spans residues 1217-1252 (CCICYAGEANAMIAPCSHRSCYGCITRHLLNCQRCF).

The protein localises to the membrane. The enzyme catalyses S-ubiquitinyl-[E2 ubiquitin-conjugating enzyme]-L-cysteine + [acceptor protein]-L-lysine = [E2 ubiquitin-conjugating enzyme]-L-cysteine + N(6)-ubiquitinyl-[acceptor protein]-L-lysine.. E3 ubiquitin-protein ligase that promotes the ubiquitination and proteasomal degradation of KRP1 and KRP2. The protein is E3 ubiquitin-protein ligase RKP (RKP) of Arabidopsis thaliana (Mouse-ear cress).